We begin with the raw amino-acid sequence, 695 residues long: N-terminal acetyltransferase A complex subunit-like protein C418.02 (695 aa).

10 TPR repeats span residues 8 to 41 (EAFLFDRSIDQFEKGQYSKSLKTIQSVLKKKPKH), 43 to 75 (DSVALLGLNLCKLHDSRSALLKCGYASSIDPKS), 76 to 109 (QFCWHALAIVYRETKDYNNSLKCYQNALAISPNN), 111 to 143 (SLWYDAAYLQAQLGLYQPLFDNWNRLLQLDSSN), 145 to 177 (EYRLCFTLSAFLSGNYKESLEQIQYLISSCNLS), 217 to 250 (FNFEHIKADFAFRQKNYEESIYLYARLLIKFPNR), 262 to 296 (WNFYKSGGLALDLLLKRTDSLIKTFSEILQTGISV), 365 to 398 (LWCTYCLCLAHYKLGDYEESNYWLNLAIDHTPTY), 399 to 432 (PELFLAKAKIFLCMGEIEEALCSFKRSVELDKSD), and 477 to 510 (VWFLVEDGESLLRQKLYGLALKRFHSIYQIYKKW).

Component of the N-terminal acetyltransferase A (NatA) complex.

Its subcellular location is the cytoplasm. It is found in the nucleus. Non-catalytic component of the NatA N-terminal acetyltransferase, which catalyzes acetylation of proteins beginning with Met-Ser, Met-Gly and Met-Ala. N-acetylation plays a role in normal eukaryotic translation and processing, protect against proteolytic degradation and protein turnover. The sequence is that of N-terminal acetyltransferase A complex subunit-like protein C418.02 from Schizosaccharomyces pombe (strain 972 / ATCC 24843) (Fission yeast).